Here is a 124-residue protein sequence, read N- to C-terminus: Large ribosomal subunit protein bL12 (124 aa).

It belongs to the bacterial ribosomal protein bL12 family. As to quaternary structure, homodimer. Part of the ribosomal stalk of the 50S ribosomal subunit. Forms a multimeric L10(L12)X complex, where L10 forms an elongated spine to which 2 to 4 L12 dimers bind in a sequential fashion. Binds GTP-bound translation factors.

Its function is as follows. Forms part of the ribosomal stalk which helps the ribosome interact with GTP-bound translation factors. Is thus essential for accurate translation. In Burkholderia ambifaria (strain MC40-6), this protein is Large ribosomal subunit protein bL12.